The following is a 377-amino-acid chain: S-adenosylmethionine decarboxylase proenzyme 2 (377 aa).

Residues Glu-24 and Glu-27 contribute to the active site. Residue Ser-84 is the Schiff-base intermediate with substrate; via pyruvic acid of the active site. Residue Ser-84 is modified to Pyruvic acid (Ser); by autocatalysis. Residue Cys-98 is the Proton donor; for catalytic activity of the active site. Active-site proton acceptor; for processing activity residues include Ser-246 and His-259.

Belongs to the eukaryotic AdoMetDC family. Pyruvate serves as cofactor. Is synthesized initially as an inactive proenzyme. Formation of the active enzyme involves a self-maturation process in which the active site pyruvoyl group is generated from an internal serine residue via an autocatalytic post-translational modification. Two non-identical subunits are generated from the proenzyme in this reaction, and the pyruvate is formed at the N-terminus of the alpha chain, which is derived from the carboxyl end of the proenzyme. The post-translation cleavage follows an unusual pathway, termed non-hydrolytic serinolysis, in which the side chain hydroxyl group of the serine supplies its oxygen atom to form the C-terminus of the beta chain, while the remainder of the serine residue undergoes an oxidative deamination to produce ammonia and the pyruvoyl group blocking the N-terminus of the alpha chain.

The enzyme catalyses S-adenosyl-L-methionine + H(+) = S-adenosyl 3-(methylsulfanyl)propylamine + CO2. It participates in amine and polyamine biosynthesis; S-adenosylmethioninamine biosynthesis; S-adenosylmethioninamine from S-adenosyl-L-methionine: step 1/1. This Dianthus caryophyllus (Carnation) protein is S-adenosylmethionine decarboxylase proenzyme 2 (SAMDC2).